Consider the following 485-residue polypeptide: Alpha-amylase (485 aa).

A signal peptide spans 1–18 (MFLTSVLILCSLAALSLG). Q19 is subject to Pyrrolidone carboxylic acid. C46 and C102 are joined by a disulfide. Residues N116, R164, and D173 each coordinate Ca(2+). A disulfide bond links C152 and C166. Position 201 (R201) interacts with chloride. The Nucleophile role is filled by D203. H207 is a Ca(2+) binding site. E240 acts as the Proton donor in catalysis. Positions 303 and 339 each coordinate chloride. C439 and C451 are oxidised to a cystine. The N-linked (GlcNAc...) asparagine glycan is linked to N448.

The protein belongs to the glycosyl hydrolase 13 family. As to quaternary structure, monomer. The cofactor is Ca(2+). Chloride serves as cofactor. In terms of tissue distribution, expressed in larval and adult gut.

It is found in the secreted. It catalyses the reaction Endohydrolysis of (1-&gt;4)-alpha-D-glucosidic linkages in polysaccharides containing three or more (1-&gt;4)-alpha-linked D-glucose units.. The protein is Alpha-amylase of Phaedon cochleariae (Mustard beetle).